Consider the following 193-residue polypeptide: MASTDKPGGDPEYRTSSTPAPAGVDYFKFDVILRFLLFAASLVAVVVIVTANQTEVIRVPQPVPWPAKFRYSPAFVYFVAALSVTGLYSIITTLASLLASNKPALKTKLLLYFILWDALILGIIASATGTAGGVAYLGLKGNRHVVGWNKICHVYDKFCRHVGASIAVALFGSVVTVLLIWLSAYSIHSRVPK.

Over 1–30 (MASTDKPGGDPEYRTSSTPAPAGVDYFKFD) the chain is Cytoplasmic. Residues 31-51 (VILRFLLFAASLVAVVVIVTA) form a helical membrane-spanning segment. N-linked (GlcNAc...) asparagine glycosylation occurs at N52. The Extracellular segment spans residues 52–73 (NQTEVIRVPQPVPWPAKFRYSP). The helical transmembrane segment at 74-94 (AFVYFVAALSVTGLYSIITTL) threads the bilayer. Over 95 to 108 (ASLLASNKPALKTK) the chain is Cytoplasmic. Residues 109–129 (LLLYFILWDALILGIIASATG) form a helical membrane-spanning segment. Over 130 to 161 (TAGGVAYLGLKGNRHVVGWNKICHVYDKFCRH) the chain is Extracellular. Residues 162–182 (VGASIAVALFGSVVTVLLIWL) form a helical membrane-spanning segment. At 183–193 (SAYSIHSRVPK) the chain is on the cytoplasmic side.

Belongs to the Casparian strip membrane proteins (CASP) family. As to quaternary structure, homodimer and heterodimers.

It is found in the cell membrane. The protein is CASP-like protein 1D2 of Glycine max (Soybean).